A 245-amino-acid chain; its full sequence is Nisin immunity protein (245 aa).

An N-terminal signal peptide occupies residues 1–19; it reads MRRYLILIVALIGITGLSG. Cys-20 carries N-palmitoyl cysteine lipidation. A lipid anchor (S-diacylglycerol cysteine) is attached at Cys-20.

It localises to the cell membrane. Involved in immunity against exogenously supplied nisin. The sequence is that of Nisin immunity protein (nisI) from Lactococcus lactis subsp. lactis (Streptococcus lactis).